We begin with the raw amino-acid sequence, 110 residues long: Large ribosomal subunit protein uL22 (110 aa).

Belongs to the universal ribosomal protein uL22 family. Part of the 50S ribosomal subunit.

Functionally, this protein binds specifically to 23S rRNA; its binding is stimulated by other ribosomal proteins, e.g. L4, L17, and L20. It is important during the early stages of 50S assembly. It makes multiple contacts with different domains of the 23S rRNA in the assembled 50S subunit and ribosome. In terms of biological role, the globular domain of the protein is located near the polypeptide exit tunnel on the outside of the subunit, while an extended beta-hairpin is found that lines the wall of the exit tunnel in the center of the 70S ribosome. This chain is Large ribosomal subunit protein uL22, found in Leptospira borgpetersenii serovar Hardjo-bovis (strain JB197).